Here is a 157-residue protein sequence, read N- to C-terminus: Protein FAM219A (157 aa).

At M1 the chain carries N-acetylmethionine. Residues 1–103 form a disordered region; it reads MMEEIDRFQD…SRYSSSGYSS (103 aa). Over residues 17–33 the composition is skewed to basic and acidic residues; that stretch reads SDRDCDAREEKQRELAR. Polar residues predominate over residues 38–52; sequence KNGSMGSPVNQQPKK. S44 and S74 each carry phosphoserine. Residue T85 is modified to Phosphothreonine. Phosphoserine is present on residues S87 and S94. The span at 94–103 shows a compositional bias: low complexity; it reads SRYSSSGYSS.

It belongs to the FAM219 family.

The chain is Protein FAM219A (Fam219a) from Mus musculus (Mouse).